A 154-amino-acid chain; its full sequence is Interleukin-2 (154 aa).

The first 20 residues, 1–20 (MYKLQLLSCIALTLALVANS), serve as a signal peptide directing secretion. Threonine 23 carries O-linked (GalNAc...) threonine glycosylation. Cysteines 78 and 126 form a disulfide.

It belongs to the IL-2 family.

It localises to the secreted. Cytokine produced by activated CD4-positive helper T-cells and to a lesser extend activated CD8-positive T-cells and natural killer (NK) cells that plays pivotal roles in the immune response and tolerance. Binds to a receptor complex composed of either the high-affinity trimeric IL-2R (IL2RA/CD25, IL2RB/CD122 and IL2RG/CD132) or the low-affinity dimeric IL-2R (IL2RB and IL2RG). Interaction with the receptor leads to oligomerization and conformation changes in the IL-2R subunits resulting in downstream signaling starting with phosphorylation of JAK1 and JAK3. In turn, JAK1 and JAK3 phosphorylate the receptor to form a docking site leading to the phosphorylation of several substrates including STAT5. This process leads to activation of several pathways including STAT, phosphoinositide-3-kinase/PI3K and mitogen-activated protein kinase/MAPK pathways. Functions as a T-cell growth factor and can increase NK-cell cytolytic activity as well. Promotes strong proliferation of activated B-cells and subsequently immunoglobulin production. Plays a pivotal role in regulating the adaptive immune system by controlling the survival and proliferation of regulatory T-cells, which are required for the maintenance of immune tolerance. Moreover, participates in the differentiation and homeostasis of effector T-cell subsets, including Th1, Th2, Th17 as well as memory CD8-positive T-cells. This is Interleukin-2 (IL2) from Lama glama (Llama).